The chain runs to 531 residues: Squalene epoxidase 1 (531 aa).

A helical membrane pass occupies residues 9–29; sequence ILPLLISSLLISFVAFYGFFV. FAD-binding positions include 70 to 71, 90 to 91, Arg-98, Arg-169, Val-185, Asp-347, and Met-360; these read VA and ER. 2 consecutive transmembrane segments (helical) span residues 458–478 and 483–503; these read LVCHFFAVAVYGVIRLLIPFP and IWLGAKLISGASGIIFPIIKA.

The protein belongs to the squalene monooxygenase family. FAD serves as cofactor. Expressed in seedlings, leaves, stems, inflorescences, sepals, style and siliques. Expressed in expanded cotyledons, root tips and cortical cells of the root elongation zone, but not in root hair cells. In leaves, expressed in most cells, with a very strong expression in stomata.

Its subcellular location is the membrane. The catalysed reaction is squalene + reduced [NADPH--hemoprotein reductase] + O2 = (S)-2,3-epoxysqualene + oxidized [NADPH--hemoprotein reductase] + H2O + H(+). Its pathway is terpene metabolism; lanosterol biosynthesis; lanosterol from farnesyl diphosphate: step 2/3. In terms of biological role, catalyzes the stereospecific oxidation of squalene to (S)-2,3-epoxysqualene, and is considered to be a rate-limiting enzyme in steroid biosynthesis. Can produce not only oxidosqualene, but also 2,3:22,23-dioxidosqualene. Main squalene epoxidase in the root. Sqe1 mutants may show defects in membrane lipid rafts, impairing the correct localization of RHD2 NADPH oxidase and the proper polarized production of ROS. This chain is Squalene epoxidase 1 (SQE1), found in Arabidopsis thaliana (Mouse-ear cress).